We begin with the raw amino-acid sequence, 147 residues long: Cyanate hydratase (147 aa).

Active-site residues include Arg88, Glu91, and Ser114.

This sequence belongs to the cyanase family.

It carries out the reaction cyanate + hydrogencarbonate + 3 H(+) = NH4(+) + 2 CO2. In terms of biological role, catalyzes the reaction of cyanate with bicarbonate to produce ammonia and carbon dioxide. This Acaryochloris marina (strain MBIC 11017) protein is Cyanate hydratase.